Consider the following 310-residue polypeptide: 2-dehydro-3-deoxygluconokinase (310 aa).

Substrate-binding positions include 29–33 (GDTLN), Tyr89, 103–105 (YWR), and Arg171. Residues 169-171 (NYR), 229-234 (KRGADA), and 262-265 (AAGD) each bind ATP. Asp265 contacts substrate. Asp265 acts as the Proton acceptor in catalysis.

Belongs to the carbohydrate kinase PfkB family.

It carries out the reaction 2-dehydro-3-deoxy-D-gluconate + ATP = 2-dehydro-3-deoxy-6-phospho-D-gluconate + ADP + H(+). Its pathway is carbohydrate acid metabolism; 2-dehydro-3-deoxy-D-gluconate degradation; D-glyceraldehyde 3-phosphate and pyruvate from 2-dehydro-3-deoxy-D-gluconate: step 1/2. In terms of biological role, catalyzes the phosphorylation of 2-keto-3-deoxygluconate (KDG) to produce 2-keto-3-deoxy-6-phosphogluconate (KDPG). The chain is 2-dehydro-3-deoxygluconokinase from Dickeya dadantii (strain 3937) (Erwinia chrysanthemi (strain 3937)).